Consider the following 118-residue polypeptide: Ribosome-binding factor A (118 aa).

Belongs to the RbfA family. In terms of assembly, monomer. Binds 30S ribosomal subunits, but not 50S ribosomal subunits or 70S ribosomes.

It is found in the cytoplasm. In terms of biological role, one of several proteins that assist in the late maturation steps of the functional core of the 30S ribosomal subunit. Associates with free 30S ribosomal subunits (but not with 30S subunits that are part of 70S ribosomes or polysomes). Required for efficient processing of 16S rRNA. May interact with the 5'-terminal helix region of 16S rRNA. The protein is Ribosome-binding factor A of Bacillus cereus (strain B4264).